The sequence spans 88 residues: Small ribosomal subunit protein uS17 (88 aa).

It belongs to the universal ribosomal protein uS17 family. Part of the 30S ribosomal subunit.

One of the primary rRNA binding proteins, it binds specifically to the 5'-end of 16S ribosomal RNA. The chain is Small ribosomal subunit protein uS17 from Vesicomyosocius okutanii subsp. Calyptogena okutanii (strain HA).